Consider the following 279-residue polypeptide: Protoheme IX farnesyltransferase (279 aa).

A run of 9 helical transmembrane segments spans residues 5–25 (LILL…AGYL), 33–53 (IAQA…AAAF), 84–103 (LAYS…LLLG), 108–125 (LFVF…TVIL), 133–153 (ILGG…LGAG), 159–179 (AVLI…ALAY), 201–221 (AAVA…MTLY), 222–242 (LAFG…VATI), and 256–276 (AMWK…LALI).

This sequence belongs to the UbiA prenyltransferase family. Protoheme IX farnesyltransferase subfamily.

It is found in the cell membrane. It carries out the reaction heme b + (2E,6E)-farnesyl diphosphate + H2O = Fe(II)-heme o + diphosphate. It participates in porphyrin-containing compound metabolism; heme O biosynthesis; heme O from protoheme: step 1/1. Its function is as follows. Converts heme B (protoheme IX) to heme O by substitution of the vinyl group on carbon 2 of heme B porphyrin ring with a hydroxyethyl farnesyl side group. The sequence is that of Protoheme IX farnesyltransferase from Pyrobaculum arsenaticum (strain DSM 13514 / JCM 11321 / PZ6).